A 153-amino-acid polypeptide reads, in one-letter code: Heavy metal-associated isoprenylated plant protein 25 (153 aa).

Positions 24 to 88 (LQTVDVRVLI…IIHRTGKRAE (65 aa)) constitute an HMA domain. Positions 35 and 38 each coordinate a metal cation. Cys-150 carries the post-translational modification Cysteine methyl ester. A lipid anchor (S-farnesyl cysteine) is attached at Cys-150. A propeptide spans 151-153 (VVM) (removed in mature form).

It belongs to the HIPP family. As to expression, expressed in roots, shoot apical meristem, trichomes and flower buds.

It is found in the membrane. In terms of biological role, heavy-metal-binding protein. Binds cadmium. May be involved in cadmium transport and play a role in cadmium detoxification. The chain is Heavy metal-associated isoprenylated plant protein 25 from Arabidopsis thaliana (Mouse-ear cress).